The primary structure comprises 424 residues: MSNYYYYYGGGRYDWLKTVEPTNFLKIGLPYQAHPLHLQHQATTPPSILEKFKRADILLNEVKSEMDPLMLQPETEKKLYQVLGSIDMFKGLRKKVEYTYNAQIVTNAWLKMYELLNTMNFNNTSQAFCNCELPGGFISAINHFNHTMMHYPTFNWVASSLYPSSETDALEDHYGLYQCNPDNWLMQSPLLKKNMDYNNGDVTIASNVKNLALKATQKLTPIHLYTADGGINVGHDYNKQEELNLKLHFGQALTGLLSLSKGGNMILKHYTLNHAFTLSLICVFSHFFEELYITKPTSSRPSNSETYIVGKNRLRLFTPKEEQVLLKRLEFFNDTPLVDLSLYQNLLESIYFAVETIHLKQQIEFLNFGMKCYRHFYNKIKLLNEYLAPKKKIFQDRWRVLNKLYVLEKKHKLKLCTSFQGSVA.

The Adrift-type SAM-dependent 2'-O-MTase domain maps to 103-315; that stretch reads QIVTNAWLKM…TYIVGKNRLR (213 aa). S-adenosyl-L-methionine is bound by residues Gly-135 and Asp-228. Residue Lys-268 is the Proton acceptor of the active site.

It localises to the virion. This Ornithodoros (relapsing fever ticks) protein is Probable methyltransferase EP424R.